Reading from the N-terminus, the 269-residue chain is Hydroxyethylthiazole kinase (269 aa).

Met-43 serves as a coordination point for substrate. ATP is bound by residues Arg-119 and Ser-165. Substrate is bound at residue Ala-192.

It belongs to the Thz kinase family. Mg(2+) is required as a cofactor.

It catalyses the reaction 5-(2-hydroxyethyl)-4-methylthiazole + ATP = 4-methyl-5-(2-phosphooxyethyl)-thiazole + ADP + H(+). Its pathway is cofactor biosynthesis; thiamine diphosphate biosynthesis; 4-methyl-5-(2-phosphoethyl)-thiazole from 5-(2-hydroxyethyl)-4-methylthiazole: step 1/1. In terms of biological role, catalyzes the phosphorylation of the hydroxyl group of 4-methyl-5-beta-hydroxyethylthiazole (THZ). This Glaesserella parasuis serovar 5 (strain SH0165) (Haemophilus parasuis) protein is Hydroxyethylthiazole kinase.